The following is a 447-amino-acid chain: Delta(5) fatty acid desaturase fat-4 (447 aa).

The 80-residue stretch at Met1–Lys80 folds into the Cytochrome b5 heme-binding domain. 4 helical membrane passes run Ile137 to Ile157, Trp257 to Ser277, Ile292 to Leu312, and Ile319 to Phe339.

The protein belongs to the fatty acid desaturase type 1 family.

The protein resides in the membrane. The catalysed reaction is (11Z,14Z)-eicosadienoyl-CoA + 2 Fe(II)-[cytochrome b5] + O2 + 2 H(+) = (5Z,11Z,14Z)-eicosatrienoyl-CoA + 2 Fe(III)-[cytochrome b5] + 2 H2O. It catalyses the reaction (11Z,14Z,17Z)-eicosatrienoyl-CoA + 2 Fe(II)-[cytochrome b5] + O2 + 2 H(+) = (5Z,11Z,14Z,17Z)-eicosatetraenoyl-CoA + 2 Fe(III)-[cytochrome b5] + 2 H2O. It carries out the reaction (8Z,11Z,14Z,17Z)-eicosatetraenoyl-CoA + 2 Fe(II)-[cytochrome b5] + O2 + 2 H(+) = (5Z,8Z,11Z,14Z,17Z)-eicosapentaenoyl-CoA + 2 Fe(III)-[cytochrome b5] + 2 H2O. The enzyme catalyses (8Z,11Z,14Z)-eicosatrienoyl-CoA + 2 Fe(II)-[cytochrome b5] + O2 + 2 H(+) = (5Z,8Z,11Z,14Z)-eicosatetraenoyl-CoA + 2 Fe(III)-[cytochrome b5] + 2 H2O. Its pathway is lipid metabolism; polyunsaturated fatty acid biosynthesis. Its function is as follows. Can function as a Delta(5) fatty acid desaturase and behaves as a (8-3) desaturase. Introduces a double bond in the fatty acid chain 5 carbons away from carboxy terminal to biosynthesize polyunsaturated fatty acids (PUFAs) endogenously (PUFAs are essential for membrane structure and many cellular and physiological processes). Acts on a variety of substrates such as dihomo-gamma-linoleoyl-CoA ((8Z,11Z,14Z)-eicosatrienoyl-CoA, 20:3n-6) to generate arachidonoyl-CoA ((5Z,8Z,11Z,14Z)-eicosatetraenoyl-CoA, 20:4n-6). Also acts on a number of other substrates, including fatty acids that do not contain a double bond at the 8 position like (11Z,14Z,17Z)-eicosatrienoyl-CoA (20:3n-3) to produce (5Z,11Z,14Z,17Z)-eicosatetraenoyl-CoA (20:4n-3). Unlike plants, Caenorhabditis elegans desaturases seem to use fatty acyl-CoAs as substrates. In Caenorhabditis elegans, this protein is Delta(5) fatty acid desaturase fat-4 (fat-4).